The sequence spans 289 residues: ATP synthase subunit gamma, mitochondrial (289 aa).

This sequence belongs to the ATPase gamma chain family. F-type ATPases have 2 components, CF(1) - the catalytic core - and CF(0) - the membrane proton channel. CF(1) has five subunits: alpha(3), beta(3), gamma(1), delta(1), epsilon(1). CF(0) has three main subunits: a, b and c.

The protein resides in the mitochondrion. Its subcellular location is the mitochondrion inner membrane. Mitochondrial membrane ATP synthase (F(1)F(0) ATP synthase or Complex V) produces ATP from ADP in the presence of a proton gradient across the membrane which is generated by electron transport complexes of the respiratory chain. F-type ATPases consist of two structural domains, F(1) - containing the extramembraneous catalytic core, and F(0) - containing the membrane proton channel, linked together by a central stalk and a peripheral stalk. During catalysis, ATP synthesis in the catalytic domain of F(1) is coupled via a rotary mechanism of the central stalk subunits to proton translocation. Part of the complex F(1) domain and the central stalk which is part of the complex rotary element. The gamma subunit protrudes into the catalytic domain formed of alpha(3)beta(3). Rotation of the central stalk against the surrounding alpha(3)beta(3) subunits leads to hydrolysis of ATP in three separate catalytic sites on the beta subunits. In Kluyveromyces lactis (strain ATCC 8585 / CBS 2359 / DSM 70799 / NBRC 1267 / NRRL Y-1140 / WM37) (Yeast), this protein is ATP synthase subunit gamma, mitochondrial (ATP3).